A 430-amino-acid chain; its full sequence is Pyrroloquinoline quinone-dependent sugar dehydrogenase (430 aa).

The first 23 residues, 1-23, serve as a signal peptide directing secretion; it reads MARLAPHTLLLALFVFLFGSCTA. An N-linked (GlcNAc...) asparagine glycan is attached at N25. Pyrroloquinoline quinone is bound at residue R57. N94 and N147 each carry an N-linked (GlcNAc...) asparagine glycan. Pyrroloquinoline quinone is bound at residue H153. N184 is a glycosylation site (N-linked (GlcNAc...) asparagine). R220 is a pyrroloquinoline quinone binding site. S240 and D242 together coordinate Ca(2+). A disulfide bridge links C281 with C316. N-linked (GlcNAc...) asparagine glycosylation is present at N306. A pyrroloquinoline quinone-binding site is contributed by H330. N-linked (GlcNAc...) asparagine glycosylation is present at N341. H350 is a binding site for pyrroloquinoline quinone. A disulfide bridge connects residues C388 and C392.

Belongs to the sugar dehydrogenase AA12 family. Ca(2+) serves as cofactor. Pyrroloquinoline quinone is required as a cofactor.

The protein resides in the secreted. Functionally, pyrroloquinoline quinone (PPQ)-dependent oxidoreductase that catalyzes the oxidation of various sugars such as L-fucose. The chain is Pyrroloquinoline quinone-dependent sugar dehydrogenase from Hypocrea jecorina (strain QM6a) (Trichoderma reesei).